A 247-amino-acid polypeptide reads, in one-letter code: 2,3-bisphosphoglycerate-dependent phosphoglycerate mutase (247 aa).

Residues 8-15 (RHGESQWN), 21-22 (TG), Arg60, 87-90 (ERHY), Lys98, 114-115 (RR), and 183-184 (GN) contribute to the substrate site. His9 (tele-phosphohistidine intermediate) is an active-site residue. Residue Glu87 is the Proton donor/acceptor of the active site.

It belongs to the phosphoglycerate mutase family. BPG-dependent PGAM subfamily.

It catalyses the reaction (2R)-2-phosphoglycerate = (2R)-3-phosphoglycerate. The protein operates within carbohydrate degradation; glycolysis; pyruvate from D-glyceraldehyde 3-phosphate: step 3/5. In terms of biological role, catalyzes the interconversion of 2-phosphoglycerate and 3-phosphoglycerate. In Chlorobaculum tepidum (strain ATCC 49652 / DSM 12025 / NBRC 103806 / TLS) (Chlorobium tepidum), this protein is 2,3-bisphosphoglycerate-dependent phosphoglycerate mutase.